The chain runs to 177 residues: MSIVKSKIRTIPDYPKPGILFRDITSLLLDPEGLALTIGTFVNRYQDKGITKVAGIEARGFLTGAPLAFQLGVGFIPIRKKGKLPAETVSEEYDLEYGKDVIEIHKDAVQPGDKILLMDDLIATGGTMIAAVKLLKKLGAQIYEAGVIIDLPDLGGSKKLQEKLEVPVFAICEFEGH.

The protein belongs to the purine/pyrimidine phosphoribosyltransferase family. As to quaternary structure, homodimer.

The protein localises to the cytoplasm. It catalyses the reaction AMP + diphosphate = 5-phospho-alpha-D-ribose 1-diphosphate + adenine. It functions in the pathway purine metabolism; AMP biosynthesis via salvage pathway; AMP from adenine: step 1/1. Functionally, catalyzes a salvage reaction resulting in the formation of AMP, that is energically less costly than de novo synthesis. This Leptospira borgpetersenii serovar Hardjo-bovis (strain JB197) protein is Adenine phosphoribosyltransferase.